The following is a 393-amino-acid chain: MSDKPKTKPLPSFVEGRLDFYIQDLIEQNENQKHLVLGKRPQQGAVVMQSNDYLSLSHNLQIQQAHRDAIYEHDDNVVMSAIFLQDDDSKPAFETQLAEYVGMGSCLLSQSGWAANIGLLQTICPPETPVYIDFFAHMSLWEGIRAAGAQAHPFMHNNMNHLRKQIQRNGSGVIVVDSVYSTIGTIAPLRDIYEMAREFDCALVVDESHSLGTHGPNGSGLVKALELTEQVDFITVSLAKTFAYRAGAILGPEKLARTLPFVAFPAIFSSTVLPQEIVRLEKTLEVIRSADDKRTMLFKRAKELRTGLKQIGFHIRSESQIVALECGSERNTERVRDFLEERNVFGAVFCRPATGKNKNIIRFSINADMTSRDIDHVLTACQEAYNHPELEFA.

Lys-240 bears the N6-(pyridoxal phosphate)lysine mark.

This sequence belongs to the class-II pyridoxal-phosphate-dependent aminotransferase family. Requires pyridoxal 5'-phosphate as cofactor.

Required for the synthesis of the quorum-sensing autoinducer CAI-1 ((S)-3-hydroxytridecan-4-one) which probably functions as an intragenus signal. In Vibrio campbellii (strain ATCC BAA-1116), this protein is CAI-1 autoinducer synthase (cqsA).